Reading from the N-terminus, the 157-residue chain is Small ribosomal subunit protein uS7cz/uS7cy (157 aa).

The protein belongs to the universal ribosomal protein uS7 family. As to quaternary structure, part of the 30S ribosomal subunit.

The protein resides in the plastid. Its subcellular location is the chloroplast. Its function is as follows. One of the primary rRNA binding proteins, it binds directly to 16S rRNA where it nucleates assembly of the head domain of the 30S subunit. This chain is Small ribosomal subunit protein uS7cz/uS7cy (rps7-A), found in Gnetum parvifolium (Small-leaved jointfir).